Here is a 430-residue protein sequence, read N- to C-terminus: Enolase (430 aa).

Residue glutamine 166 coordinates (2R)-2-phosphoglycerate. Glutamate 208 acts as the Proton donor in catalysis. Mg(2+) contacts are provided by aspartate 245, glutamate 288, and aspartate 315. (2R)-2-phosphoglycerate contacts are provided by lysine 340, arginine 369, serine 370, and lysine 391. Lysine 340 serves as the catalytic Proton acceptor.

Belongs to the enolase family. Requires Mg(2+) as cofactor.

It is found in the cytoplasm. Its subcellular location is the secreted. It localises to the cell surface. The enzyme catalyses (2R)-2-phosphoglycerate = phosphoenolpyruvate + H2O. The protein operates within carbohydrate degradation; glycolysis; pyruvate from D-glyceraldehyde 3-phosphate: step 4/5. Catalyzes the reversible conversion of 2-phosphoglycerate (2-PG) into phosphoenolpyruvate (PEP). It is essential for the degradation of carbohydrates via glycolysis. This chain is Enolase, found in Clostridium beijerinckii (strain ATCC 51743 / NCIMB 8052) (Clostridium acetobutylicum).